Reading from the N-terminus, the 276-residue chain is Putative phosphoenolpyruvate synthase regulatory protein (276 aa).

156 to 163 (GVSRSGKT) contributes to the ADP binding site.

The protein belongs to the pyruvate, phosphate/water dikinase regulatory protein family. PSRP subfamily.

The catalysed reaction is [pyruvate, water dikinase] + ADP = [pyruvate, water dikinase]-phosphate + AMP + H(+). It carries out the reaction [pyruvate, water dikinase]-phosphate + phosphate + H(+) = [pyruvate, water dikinase] + diphosphate. Bifunctional serine/threonine kinase and phosphorylase involved in the regulation of the phosphoenolpyruvate synthase (PEPS) by catalyzing its phosphorylation/dephosphorylation. The sequence is that of Putative phosphoenolpyruvate synthase regulatory protein from Acidovorax ebreus (strain TPSY) (Diaphorobacter sp. (strain TPSY)).